A 76-amino-acid chain; its full sequence is ATP synthase peripheral stalk subunit F6, mitochondrial (76 aa).

Residues Lys-9, Lys-14, and Lys-47 each carry the N6-acetyllysine modification. Residues Lys-52 and Lys-67 each carry the N6-acetyllysine; alternate modification. An N6-succinyllysine; alternate mark is found at Lys-52 and Lys-67. Residue Lys-73 is modified to N6-acetyllysine. Residue Ser-76 is modified to Phosphoserine.

This sequence belongs to the eukaryotic ATPase subunit F6 family. As to quaternary structure, component of the ATP synthase complex composed at least of ATP5F1A/subunit alpha, ATP5F1B/subunit beta, ATP5MC1/subunit c (homooctomer), MT-ATP6/subunit a, MT-ATP8/subunit 8, ATP5ME/subunit e, ATP5MF/subunit f, ATP5MG/subunit g, ATP5MK/subunit k, ATP5MJ/subunit j, ATP5F1C/subunit gamma, ATP5F1D/subunit delta, ATP5F1E/subunit epsilon, ATP5PF/subunit F6, ATP5PB/subunit b, ATP5PD/subunit d, ATP5PO/subunit OSCP. ATP synthase complex consists of a soluble F(1) head domain (subunits alpha(3) and beta(3)) - the catalytic core - and a membrane F(0) domain - the membrane proton channel (subunits c, a, 8, e, f, g, k and j). These two domains are linked by a central stalk (subunits gamma, delta, and epsilon) rotating inside the F1 region and a stationary peripheral stalk (subunits F6, b, d, and OSCP).

Its subcellular location is the mitochondrion. It localises to the mitochondrion inner membrane. In terms of biological role, subunit F6, of the mitochondrial membrane ATP synthase complex (F(1)F(0) ATP synthase or Complex V) that produces ATP from ADP in the presence of a proton gradient across the membrane which is generated by electron transport complexes of the respiratory chain. ATP synthase complex consist of a soluble F(1) head domain - the catalytic core - and a membrane F(1) domain - the membrane proton channel. These two domains are linked by a central stalk rotating inside the F(1) region and a stationary peripheral stalk. During catalysis, ATP synthesis in the catalytic domain of F(1) is coupled via a rotary mechanism of the central stalk subunits to proton translocation. In vivo, can only synthesize ATP although its ATP hydrolase activity can be activated artificially in vitro. Part of the complex F(0) domain. Part of the complex F(0) domain and the peripheric stalk, which acts as a stator to hold the catalytic alpha(3)beta(3) subcomplex and subunit a/ATP6 static relative to the rotary elements. The protein is ATP synthase peripheral stalk subunit F6, mitochondrial of Sus scrofa (Pig).